The sequence spans 402 residues: Probable tRNA pseudouridine synthase tag-124 (402 aa).

The active-site Nucleophile is the Asp85. A disordered region spans residues 383–402; that stretch reads SKKEKMAEKKKNGEESSDKL.

This sequence belongs to the tRNA pseudouridine synthase TruA family.

It catalyses the reaction a uridine in tRNA = a pseudouridine in tRNA. Its function is as follows. Formation of pseudouridine at position 38 and 39 in the anticodon stem and loop of transfer RNAs. In Caenorhabditis elegans, this protein is Probable tRNA pseudouridine synthase tag-124 (tag-124).